Reading from the N-terminus, the 104-residue chain is N(4)-acetylcytidine amidohydrolase (104 aa).

One can recognise an ASCH domain in the interval 6 to 94 (ITFFQRFQND…IAEIYPNQTQ (89 aa)). The Proton acceptor role is filled by K21. Catalysis depends on T24, which acts as the Nucleophile. The active-site Proton donor is the E74.

The protein belongs to the N(4)-acetylcytidine amidohydrolase family.

It catalyses the reaction N(4)-acetylcytidine + H2O = cytidine + acetate + H(+). The catalysed reaction is N(4)-acetyl-2'-deoxycytidine + H2O = 2'-deoxycytidine + acetate + H(+). It carries out the reaction N(4)-acetylcytosine + H2O = cytosine + acetate + H(+). Its function is as follows. Catalyzes the hydrolysis of N(4)-acetylcytidine (ac4C). The sequence is that of N(4)-acetylcytidine amidohydrolase (yqfB) from Salmonella dublin (strain CT_02021853).